The primary structure comprises 556 residues: 2-succinyl-5-enolpyruvyl-6-hydroxy-3-cyclohexene-1-carboxylate synthase (556 aa).

The protein belongs to the TPP enzyme family. MenD subfamily. In terms of assembly, homodimer. Requires Mg(2+) as cofactor. The cofactor is Mn(2+). Thiamine diphosphate serves as cofactor.

It carries out the reaction isochorismate + 2-oxoglutarate + H(+) = 5-enolpyruvoyl-6-hydroxy-2-succinyl-cyclohex-3-ene-1-carboxylate + CO2. The protein operates within quinol/quinone metabolism; 1,4-dihydroxy-2-naphthoate biosynthesis; 1,4-dihydroxy-2-naphthoate from chorismate: step 2/7. It functions in the pathway quinol/quinone metabolism; menaquinone biosynthesis. Its function is as follows. Catalyzes the thiamine diphosphate-dependent decarboxylation of 2-oxoglutarate and the subsequent addition of the resulting succinic semialdehyde-thiamine pyrophosphate anion to isochorismate to yield 2-succinyl-5-enolpyruvyl-6-hydroxy-3-cyclohexene-1-carboxylate (SEPHCHC). The protein is 2-succinyl-5-enolpyruvyl-6-hydroxy-3-cyclohexene-1-carboxylate synthase of Staphylococcus epidermidis (strain ATCC 35984 / DSM 28319 / BCRC 17069 / CCUG 31568 / BM 3577 / RP62A).